The chain runs to 229 residues: Large ribosomal subunit protein uL1 (229 aa).

The protein belongs to the universal ribosomal protein uL1 family. As to quaternary structure, part of the 50S ribosomal subunit.

Binds directly to 23S rRNA. The L1 stalk is quite mobile in the ribosome, and is involved in E site tRNA release. In terms of biological role, protein L1 is also a translational repressor protein, it controls the translation of the L11 operon by binding to its mRNA. In Streptococcus equi subsp. zooepidemicus (strain MGCS10565), this protein is Large ribosomal subunit protein uL1.